The following is a 206-amino-acid chain: 3-demethoxyubiquinol 3-hydroxylase (206 aa).

Fe cation contacts are provided by glutamate 55, glutamate 85, histidine 88, glutamate 137, glutamate 169, and histidine 172.

It belongs to the COQ7 family. Fe cation serves as cofactor.

It is found in the cell membrane. It catalyses the reaction a 5-methoxy-2-methyl-3-(all-trans-polyprenyl)benzene-1,4-diol + AH2 + O2 = a 3-demethylubiquinol + A + H2O. The protein operates within cofactor biosynthesis; ubiquinone biosynthesis. In terms of biological role, catalyzes the hydroxylation of 2-nonaprenyl-3-methyl-6-methoxy-1,4-benzoquinol during ubiquinone biosynthesis. The chain is 3-demethoxyubiquinol 3-hydroxylase from Laribacter hongkongensis (strain HLHK9).